The chain runs to 316 residues: Transaldolase (316 aa).

Lys132 serves as the catalytic Schiff-base intermediate with substrate.

Belongs to the transaldolase family. Type 1 subfamily. As to quaternary structure, homodimer.

Its subcellular location is the cytoplasm. The catalysed reaction is D-sedoheptulose 7-phosphate + D-glyceraldehyde 3-phosphate = D-erythrose 4-phosphate + beta-D-fructose 6-phosphate. It participates in carbohydrate degradation; pentose phosphate pathway; D-glyceraldehyde 3-phosphate and beta-D-fructose 6-phosphate from D-ribose 5-phosphate and D-xylulose 5-phosphate (non-oxidative stage): step 2/3. Its function is as follows. Transaldolase is important for the balance of metabolites in the pentose-phosphate pathway. The chain is Transaldolase from Vibrio cholerae serotype O1 (strain ATCC 39541 / Classical Ogawa 395 / O395).